The chain runs to 807 residues: Glycerol-3-phosphate acyltransferase (807 aa).

The HXXXXD motif motif lies at 308–313; sequence CHRSHM.

This sequence belongs to the GPAT/DAPAT family.

It is found in the cell inner membrane. The enzyme catalyses sn-glycerol 3-phosphate + an acyl-CoA = a 1-acyl-sn-glycero-3-phosphate + CoA. It participates in phospholipid metabolism; CDP-diacylglycerol biosynthesis; CDP-diacylglycerol from sn-glycerol 3-phosphate: step 1/3. The protein is Glycerol-3-phosphate acyltransferase of Shewanella denitrificans (strain OS217 / ATCC BAA-1090 / DSM 15013).